The sequence spans 799 residues: Valine--tRNA ligase (799 aa).

ATP is bound at residue Lys-536.

This sequence belongs to the class-I aminoacyl-tRNA synthetase family. ValS type 2 subfamily.

The protein localises to the cytoplasm. It carries out the reaction tRNA(Val) + L-valine + ATP = L-valyl-tRNA(Val) + AMP + diphosphate. Catalyzes the attachment of valine to tRNA(Val). As ValRS can inadvertently accommodate and process structurally similar amino acids such as threonine, to avoid such errors, it has a 'posttransfer' editing activity that hydrolyzes mischarged Thr-tRNA(Val) in a tRNA-dependent manner. This is Valine--tRNA ligase (valS) from Pyrobaculum aerophilum (strain ATCC 51768 / DSM 7523 / JCM 9630 / CIP 104966 / NBRC 100827 / IM2).